The primary structure comprises 163 residues: Nucleotide-binding protein MT0592 (163 aa).

It belongs to the YajQ family.

Its function is as follows. Nucleotide-binding protein. The protein is Nucleotide-binding protein MT0592 of Mycobacterium tuberculosis (strain CDC 1551 / Oshkosh).